We begin with the raw amino-acid sequence, 249 residues long: Vacuolar iron transporter homolog 3 (249 aa).

The interval 1-32 is disordered; the sequence is MAMQMNSVVHVSTSPSPSPATSPPPEGKQEHG. The Cytoplasmic segment spans residues 1–74; sequence MAMQMNSVVH…SGRAQWLRAA (74 aa). The segment covering 16–26 has biased composition (pro residues); the sequence is SPSPATSPPPE. A helical membrane pass occupies residues 75–95; the sequence is VLGANDGLVSVASLMIGVGAV. The Vacuolar segment spans residues 96–102; sequence SESGRAM. A helical transmembrane segment spans residues 103–123; it reads LVSGVAGLVAGACSMAIGEFV. Residues 124–166 lie on the Cytoplasmic side of the membrane; that stretch reads SVYAQYDIEVAAARRRRRQRRRRCDGDGEEEGSGRLPSPFKAA. The helical transmembrane segment at 167-187 threads the bilayer; that stretch reads AASALAFTVGALLPLLAGGFV. Residues 188–193 are Vacuolar-facing; the sequence is RPWAPR. A helical transmembrane segment spans residues 194-214; that stretch reads VAAVCAATSAALAGFGALGAA. Topologically, residues 215 to 226 are cytoplasmic; the sequence is LGGASPARSAAR. A helical transmembrane segment spans residues 227-247; sequence VLLGGWAAMAACYGVLRLFAN. At 248–249 the chain is on the vacuolar side; it reads LY.

Belongs to the CCC1 family.

Its subcellular location is the vacuole membrane. It catalyses the reaction Fe(2+)(in) = Fe(2+)(out). Functionally, probable vacuolar iron transporter that may be involved in the regulation of iron distribution throughout the plant. The protein is Vacuolar iron transporter homolog 3 of Oryza sativa subsp. japonica (Rice).